A 151-amino-acid polypeptide reads, in one-letter code: 3-hydroxyacyl-[acyl-carrier-protein] dehydratase FabZ (151 aa).

The active site involves H56.

The protein belongs to the thioester dehydratase family. FabZ subfamily.

Its subcellular location is the cytoplasm. The catalysed reaction is a (3R)-hydroxyacyl-[ACP] = a (2E)-enoyl-[ACP] + H2O. Functionally, involved in unsaturated fatty acids biosynthesis. Catalyzes the dehydration of short chain beta-hydroxyacyl-ACPs and long chain saturated and unsaturated beta-hydroxyacyl-ACPs. In Nitrobacter winogradskyi (strain ATCC 25391 / DSM 10237 / CIP 104748 / NCIMB 11846 / Nb-255), this protein is 3-hydroxyacyl-[acyl-carrier-protein] dehydratase FabZ.